A 1426-amino-acid chain; its full sequence is Nephrocystin-4 (1426 aa).

The residue at position 142 (S142) is a Phosphoserine. Disordered stretches follow at residues 450 to 536 and 896 to 935; these read GSEE…SPAQ and RQGK…GRRG. The span at 474 to 486 shows a compositional bias: pro residues; that stretch reads KPPTSPSSPPAPV. Over residues 503–536 the composition is skewed to polar residues; that stretch reads SISQLAASPRSPTQHCLARPTSQLPHGSQASPAQ. The interval 823 to 1426 is sufficient for basal bodies localization; that stretch reads LTLANVGHPC…EAFCVKVIYQ (604 aa).

This sequence belongs to the NPHP4 family. In terms of assembly, interacts with NPHP1. Interacts with NPHP1 and RPGRIP1L/NPHP8; NPHP1, NPHP4 and RPGRIP1L are proposed to form a functional NPHP1-4-8 module localized to cell-cell contacts and the ciliary transition zone; NPHP4 mediates the interaction between NPHP1 and RPGRIP1L. Interacts with IQCB1/NPHP5; the interaction likely requires additional interactors. Interacts with RPGRIP1, CEP164, JADE1, PALS1, INADL, PARD6A, INVS, DVL2, LATS1. Interacts with INTU; INTU mediates the interaction between NPHP4 and DAAM1. Interacts with SPATA7. As to expression, expressed in kidney, skeletal muscle, heart and liver, and to a lesser extent in brain and lung.

The protein localises to the cytoplasm. It localises to the cytoskeleton. The protein resides in the cilium basal body. Its subcellular location is the microtubule organizing center. It is found in the centrosome. The protein localises to the cell junction. It localises to the tight junction. The protein resides in the nucleus. Involved in the organization of apical junctions; the function is proposed to implicate a NPHP1-4-8 module. Does not seem to be strictly required for ciliogenesis. Required for building functional cilia. Involved in the organization of the subapical actin network in multiciliated epithelial cells. Seems to recruit INT to basal bodies of motile cilia which subsequently interacts with actin-modifying proteins such as DAAM1. In cooperation with INVS may down-regulate the canonical Wnt pathway and promote the Wnt-PCP pathway by regulating expression and subcellular location of disheveled proteins. Stabilizes protein levels of JADE1 and promotes its translocation to the nucleus leading to cooperative inhibition of canonical Wnt signaling. Acts as a negative regulator of the hippo pathway by association with LATS1 and modifying LATS1-dependent phosphorylation and localization of WWTR1/TAZ. In Homo sapiens (Human), this protein is Nephrocystin-4 (NPHP4).